Consider the following 303-residue polypeptide: Putative fimbrium subunit Fim1C (303 aa).

An N-terminal signal peptide occupies residues 1–22; it reads MKKQALICALLATVLLPGCSED.

The protein belongs to the bacteroidetes fimbrillin superfamily. Mfa-like family. As to quaternary structure, may be part of the fimbrial tip.

It is found in the fimbrium. In terms of biological role, putative component of the fimbrium tip. Fimbriae are filamentous appendages on the cell surface that mediate cell adhesion and biofilm formation. This is Putative fimbrium subunit Fim1C (fim1C) from Bacteroides uniformis (strain ATCC 8492 / DSM 6597 / CCUG 4942 / CIP 103695 / JCM 5828 / KCTC 5204 / NCTC 13054 / VPI 0061).